The chain runs to 279 residues: Putative polysaccharide deacetylase YxkH (279 aa).

A signal peptide spans 1 to 19 (MKRLFLSIFLLGSCLALAA). A lipid anchor (N-palmitoyl cysteine) is attached at Cys20. Residue Cys20 is the site of S-diacylglycerol cysteine attachment. The disordered stretch occupies residues 29–51 (QPMPKAEQKKPEKKAVQVQKKED). Over residues 34-51 (AEQKKPEKKAVQVQKKED) the composition is skewed to basic and acidic residues. One can recognise a NodB homology domain in the interval 119-279 (KCVLITFDDG…AFGAYIESMK (161 aa)).

This sequence belongs to the polysaccharide deacetylase family.

It localises to the cell membrane. This Bacillus subtilis (strain 168) protein is Putative polysaccharide deacetylase YxkH (yxkH).